A 200-amino-acid polypeptide reads, in one-letter code: Putative peroxiredoxin sll0755 (200 aa).

Positions L5–H163 constitute a Thioredoxin domain. C50 functions as the Cysteine sulfenic acid (-SOH) intermediate in the catalytic mechanism.

It belongs to the peroxiredoxin family. AhpC/Prx1 subfamily. In terms of assembly, homodimer; disulfide-linked, upon oxidation.

It is found in the cytoplasm. It carries out the reaction a hydroperoxide + [thioredoxin]-dithiol = an alcohol + [thioredoxin]-disulfide + H2O. Functionally, thiol-specific peroxidase that catalyzes the reduction of hydrogen peroxide and organic hydroperoxides to water and alcohols, respectively. Plays a role in cell protection against oxidative stress by detoxifying peroxides. In Synechocystis sp. (strain ATCC 27184 / PCC 6803 / Kazusa), this protein is Putative peroxiredoxin sll0755.